A 925-amino-acid chain; its full sequence is Colossin-D (925 aa).

The first 26 residues, 1-26 (MIKVFKDLKFLILITIILLNLKSINC), serve as a signal peptide directing secretion. N-linked (GlcNAc...) asparagine glycosylation is found at Asn47, Asn95, Asn142, Asn166, Asn283, Asn334, Asn344, Asn378, Asn401, Asn511, and Asn642.

It belongs to the serine-aspartate repeat-containing protein (SDr) family.

It localises to the secreted. In Dictyostelium discoideum (Social amoeba), this protein is Colossin-D (colD).